We begin with the raw amino-acid sequence, 79 residues long: D-alanyl carrier protein (79 aa).

In terms of domain architecture, Carrier spans 1-77 (MDIKSEVIEI…KIIAGIVELQ (77 aa)). S35 is subject to O-(pantetheine 4'-phosphoryl)serine.

The protein belongs to the DltC family. In terms of processing, 4'-phosphopantetheine is transferred from CoA to a specific serine of apo-DCP.

The protein resides in the cytoplasm. It functions in the pathway cell wall biogenesis; lipoteichoic acid biosynthesis. Functionally, carrier protein involved in the D-alanylation of lipoteichoic acid (LTA). The loading of thioester-linked D-alanine onto DltC is catalyzed by D-alanine--D-alanyl carrier protein ligase DltA. The DltC-carried D-alanyl group is further transferred to cell membrane phosphatidylglycerol (PG) by forming an ester bond, probably catalyzed by DltD. D-alanylation of LTA plays an important role in modulating the properties of the cell wall in Gram-positive bacteria, influencing the net charge of the cell wall. In Streptococcus pneumoniae serotype 2 (strain D39 / NCTC 7466), this protein is D-alanyl carrier protein.